Here is a 191-residue protein sequence, read N- to C-terminus: Ankyrin repeat domain-containing protein 22 (191 aa).

ANK repeat units follow at residues 39–68, 72–100, 101–130, and 134–163; these read NGDT…DVNL, KERT…MPVL, LIGY…EVNA, and DGYT…DPMI.

This Mus musculus (Mouse) protein is Ankyrin repeat domain-containing protein 22 (Ankrd22).